Reading from the N-terminus, the 574-residue chain is Sulfate adenylyltransferase (574 aa).

An N-terminal region spans residues 1-170 (MANAPHGGVL…VQAVSKPAYY (170 aa)). Positions 171 to 395 (DYVALRYTPA…LRESYPPKAK (225 aa)) are catalytic. Position 198 (Gln198) interacts with sulfate. ATP-binding positions include 198–201 (QTRN) and 292–295 (GRDH). Residues Thr199, Arg200, and Asn201 contribute to the active site. Arg200 serves as a coordination point for sulfate. Residue Ala296 coordinates sulfate. Met334 serves as a coordination point for ATP. Residues 396-574 (QGFTLFLTGL…ILLLEAQSLI (179 aa)) are allosteric regulation domain; adenylyl-sulfate kinase-like. Residues 435-438 (ETVR), Arg452, 478-479 (IA), and Lys519 each bind 3'-phosphoadenylyl sulfate.

It in the N-terminal section; belongs to the sulfate adenylyltransferase family. The protein in the C-terminal section; belongs to the APS kinase family. As to quaternary structure, homohexamer. Dimer of trimers.

The protein resides in the cytoplasm. It catalyses the reaction sulfate + ATP + H(+) = adenosine 5'-phosphosulfate + diphosphate. The protein operates within sulfur metabolism; hydrogen sulfide biosynthesis; sulfite from sulfate: step 1/3. Its activity is regulated as follows. Allosterically inhibited by 3'-phosphoadenosine 5'-phosphosulfate (PAPS). Functionally, catalyzes the first intracellular reaction of sulfate assimilation, forming adenosine-5'-phosphosulfate (APS) from inorganic sulfate and ATP. Plays an important role in sulfate activation as a component of the biosynthesis pathway of sulfur-containing amino acids. The protein is Sulfate adenylyltransferase of Mycosarcoma maydis (Corn smut fungus).